A 245-amino-acid chain; its full sequence is NADH-quinone oxidoreductase subunit C (245 aa).

A compositionally biased stretch (basic and acidic residues) spans Met1–Asp10. Disordered stretches follow at residues Met1–Gly54 and Gln217–Gln245. Residues Gly11 to Ala28 show a composition bias toward low complexity. A compositionally biased stretch (gly residues) spans Gly39 to Gly54.

Belongs to the complex I 30 kDa subunit family. NDH-1 is composed of 14 different subunits. Subunits NuoB, C, D, E, F, and G constitute the peripheral sector of the complex.

The protein resides in the cell membrane. It catalyses the reaction a quinone + NADH + 5 H(+)(in) = a quinol + NAD(+) + 4 H(+)(out). Its function is as follows. NDH-1 shuttles electrons from NADH, via FMN and iron-sulfur (Fe-S) centers, to quinones in the respiratory chain. The immediate electron acceptor for the enzyme in this species is believed to be a menaquinone. Couples the redox reaction to proton translocation (for every two electrons transferred, four hydrogen ions are translocated across the cytoplasmic membrane), and thus conserves the redox energy in a proton gradient. This Salinispora arenicola (strain CNS-205) protein is NADH-quinone oxidoreductase subunit C.